A 38-amino-acid chain; its full sequence is DNA binding protein VP8 (38 aa).

Residues 1–16 (MKRKPMSRKASQKTFK) are compositionally biased toward basic residues. A disordered region spans residues 1-38 (MKRKPMSRKASQKTFKKNTGVQRMNHLNPRAMRGGIRL).

Belongs to the microviridae J protein family.

The protein localises to the virion. The protein resides in the host cytoplasm. In terms of biological role, mediates ssDNA packaging into virion, it locates to the internal surface of the capsid, thereby displacing the internal scaffolding protein VP3 during virion formation. Additionally, protein VP8 plays a role in viral attachment to the host cell. The chain is DNA binding protein VP8 from Bdellovibrio phage phiMH2K (Bacteriophage phiMH2K).